Here is a 68-residue protein sequence, read N- to C-terminus: MYKQKKKNHPFQCKKKKKKKKKKKKKIKLLFNYFLFFNFIITTFSDDKQLGFILFHYFKIIEVIIKDN.

The disordered stretch occupies residues 1–20 (MYKQKKKNHPFQCKKKKKKK). A helical membrane pass occupies residues 27–44 (IKLLFNYFLFFNFIITTF).

It localises to the membrane. This is an uncharacterized protein from Dictyostelium discoideum (Social amoeba).